We begin with the raw amino-acid sequence, 233 residues long: Phosphatidylserine decarboxylase proenzyme (233 aa).

The active-site Schiff-base intermediate with substrate; via pyruvic acid is the Ser190. Pyruvic acid (Ser); by autocatalysis is present on Ser190.

The protein belongs to the phosphatidylserine decarboxylase family. PSD-A subfamily. As to quaternary structure, heterodimer of a large membrane-associated beta subunit and a small pyruvoyl-containing alpha subunit. Pyruvate is required as a cofactor. In terms of processing, is synthesized initially as an inactive proenzyme. Formation of the active enzyme involves a self-maturation process in which the active site pyruvoyl group is generated from an internal serine residue via an autocatalytic post-translational modification. Two non-identical subunits are generated from the proenzyme in this reaction, and the pyruvate is formed at the N-terminus of the alpha chain, which is derived from the carboxyl end of the proenzyme. The post-translation cleavage follows an unusual pathway, termed non-hydrolytic serinolysis, in which the side chain hydroxyl group of the serine supplies its oxygen atom to form the C-terminus of the beta chain, while the remainder of the serine residue undergoes an oxidative deamination to produce ammonia and the pyruvoyl prosthetic group on the alpha chain.

The protein resides in the cell membrane. It catalyses the reaction a 1,2-diacyl-sn-glycero-3-phospho-L-serine + H(+) = a 1,2-diacyl-sn-glycero-3-phosphoethanolamine + CO2. It functions in the pathway phospholipid metabolism; phosphatidylethanolamine biosynthesis; phosphatidylethanolamine from CDP-diacylglycerol: step 2/2. Its function is as follows. Catalyzes the formation of phosphatidylethanolamine (PtdEtn) from phosphatidylserine (PtdSer). In Azorhizobium caulinodans (strain ATCC 43989 / DSM 5975 / JCM 20966 / LMG 6465 / NBRC 14845 / NCIMB 13405 / ORS 571), this protein is Phosphatidylserine decarboxylase proenzyme.